A 276-amino-acid polypeptide reads, in one-letter code: MCIIFFKFDPRPVSKNAYRLILAANRDEFYHRPARAADFWGSNNEVLSGLDMEEGKEGGTWLGISTRGKLAALTNYLQPRLNRNARGRGELVAQFLTSDMDSLSYLKKVSAEGHLYNGFNLIAADLSAEKGDVICYYGNRGEREPVVLAPGTYGLSNALLETPWRKLCFGKQLFLEAVERGRELPRDALVAQLLAVLSNDEAQLPDPAIEAQGREYVRPILSKYAAVCVRCPDYGTRTSTVILVDADGHVTFTERSMLGSDPTRWETTTHEFRLQS.

It belongs to the Tango2 family.

Its subcellular location is the cytoplasm. The protein localises to the mitochondrion. The protein resides in the golgi apparatus. In terms of biological role, may be involved in lipid homeostasis. The sequence is that of Transport and Golgi organization protein 2 homolog (TANGO2) from Bos taurus (Bovine).